The sequence spans 678 residues: Probable antibacterial peptide polyprotein (678 aa).

Repeat copies occupy residues 1 to 67, 68 to 114, 115 to 161, 162 to 208, 209 to 255, 256 to 302, 303 to 349, 350 to 396, 397 to 443, 444 to 490, 491 to 537, 538 to 584, 585 to 631, and 632 to 678. The interval 1 to 678 is 14 X approximate tandem repeats; it reads MRSPRVIHLA…SEGVVLPEVR (678 aa). Thr-32 carries an O-linked (GalNAc...) threonine glycan. Disordered stretches follow at residues 58–97 and 113–678; these read SEAE…DASL and VRER…PEVR. Positions 64–73 are enriched in basic and acidic residues; the sequence is PEVRERRSPV. O-linked (GalNAc...) threonine glycosylation is found at Thr-83 and Thr-130. Low complexity predominate over residues 145-157; that stretch reads ESELSPLSEAEVL. Over residues 158-167 the composition is skewed to basic and acidic residues; the sequence is PEVRERRSPV. An O-linked (GalNAc...) threonine glycan is attached at Thr-177. The segment covering 188-204 has biased composition (low complexity); sequence VASLESELSPLSEAEVL. The span at 205–214 shows a compositional bias: basic and acidic residues; the sequence is PEVRERRSPV. O-linked (GalNAc...) threonine glycosylation is found at Thr-224 and Thr-271. Over residues 299–308 the composition is skewed to basic and acidic residues; the sequence is PEVRERRSPV. An O-linked (GalNAc...) threonine glycan is attached at Thr-318. Positions 333 to 345 are enriched in low complexity; the sequence is ESELSPLSEAEVL. Over residues 346 to 355 the composition is skewed to basic and acidic residues; sequence PEVRERRSPV. Residue Thr-365 is glycosylated (O-linked (GalNAc...) threonine). The segment covering 380 to 392 has biased composition (low complexity); the sequence is ESELSPLSEAEVL. A compositionally biased stretch (basic and acidic residues) spans 393 to 402; sequence PEVRERRSPV. Thr-412 carries an O-linked (GalNAc...) threonine glycan. Positions 427-439 are enriched in low complexity; it reads ESELSPLSEAEVL. Positions 440–449 are enriched in basic and acidic residues; sequence PEVRERRSPV. O-linked (GalNAc...) threonine glycosylation occurs at Thr-459. The segment covering 474–486 has biased composition (low complexity); the sequence is ESELSPLSEAEVL. Residues 487-496 are compositionally biased toward basic and acidic residues; that stretch reads PEVRERRSPV. A glycan (O-linked (GalNAc...) threonine) is linked at Thr-506. Positions 521-533 are enriched in low complexity; sequence ESELSPSSEAEVL. The segment covering 534–543 has biased composition (basic and acidic residues); the sequence is PEVRERRSPV. Thr-553 is a glycosylation site (O-linked (GalNAc...) threonine). A compositionally biased stretch (low complexity) spans 568-580; sequence ESELSPLSEAEVL. A compositionally biased stretch (basic and acidic residues) spans 581 to 590; the sequence is PEVRERRSPV. Residue Thr-600 is glycosylated (O-linked (GalNAc...) threonine). The span at 615–627 shows a compositional bias: low complexity; sequence ESELSPLSEAEGL. O-linked (GalNAc...) threonine glycosylation is present at Thr-647.

It localises to the secreted. Has antibacterial activity in vitro. In Riptortus clavatus (Bean bug), this protein is Probable antibacterial peptide polyprotein.